The sequence spans 461 residues: UDP-glycosyltransferase 82A1 (461 aa).

UDP-alpha-D-glucose contacts are provided by residues Ser292, 349–351, 366–374, and 388–391; these read APQ, HCGWNSTME, and AGDQ.

The protein belongs to the UDP-glycosyltransferase family.

In Arabidopsis thaliana (Mouse-ear cress), this protein is UDP-glycosyltransferase 82A1 (UGT82A1).